The following is a 69-amino-acid chain: Metallothionein-like protein CRS5 (69 aa).

Belongs to the metallothionein superfamily. Type 13 family.

Its function is as follows. Critical role in copper (specific) homeostasis and detoxification. May protect by directly chelating and sequestering copper ions. The sequence is that of Metallothionein-like protein CRS5 (CRS5) from Saccharomyces cerevisiae (strain RM11-1a) (Baker's yeast).